Consider the following 884-residue polypeptide: Valine--tRNA ligase (884 aa).

Positions 46 to 56 match the 'HIGH' region motif; sequence PNVTGKLHLGH. A 'KMSKS' region motif is present at residues 520-524; it reads KMSKS. Position 523 (Lys-523) interacts with ATP. A coiled-coil region spans residues 809 to 844; it reads LADLLNVEEELARLEKELAKWQKELNMVGKKLSNER.

This sequence belongs to the class-I aminoacyl-tRNA synthetase family. ValS type 1 subfamily. Monomer.

It is found in the cytoplasm. The enzyme catalyses tRNA(Val) + L-valine + ATP = L-valyl-tRNA(Val) + AMP + diphosphate. Functionally, catalyzes the attachment of valine to tRNA(Val). As ValRS can inadvertently accommodate and process structurally similar amino acids such as threonine, to avoid such errors, it has a 'posttransfer' editing activity that hydrolyzes mischarged Thr-tRNA(Val) in a tRNA-dependent manner. This is Valine--tRNA ligase from Streptococcus agalactiae serotype III (strain NEM316).